The following is a 317-amino-acid chain: Putative HTH-type transcriptional regulatory protein Mboo_0195 (317 aa).

One can recognise an HTH cro/C1-type domain in the interval 132–185 (LRELRERRSMSLGDLGQVLGVSRRTISKYESGMGTTLEVAIRIEEYFNTGVVES). The segment at residues 143-162 (LGDLGQVLGVSRRTISKYES) is a DNA-binding region (H-T-H motif).

The polypeptide is Putative HTH-type transcriptional regulatory protein Mboo_0195 (Methanoregula boonei (strain DSM 21154 / JCM 14090 / 6A8)).